The chain runs to 269 residues: CCAAT/enhancer-binding protein delta (269 aa).

Disordered regions lie at residues 1 to 48, 97 to 133, and 151 to 219; these read MSAA…PGAA, PLELLPGGPARPLGPGPAAPRLLKREPDWGDGDAPGS, and AAGQ…NQEM. Residue Ser-2 is modified to N-acetylserine. Composition is skewed to low complexity over residues 36–48 and 97–107; these read GAEPGALGEPGAA and PLELLPGGPAR. Lys-120 participates in a covalent cross-link: Glycyl lysine isopeptide (Lys-Gly) (interchain with G-Cter in SUMO). The span at 155 to 175 shows a compositional bias: pro residues; the sequence is PTPPTSPEPPRSSPRQTPAPG. Positions 177-201 are enriched in basic and acidic residues; the sequence is AREKSAGKRGPDRGSPEYRQRRERN. In terms of domain architecture, bZIP spans 191–254; that stretch reads SPEYRQRRER…AGLRQFFKQL (64 aa). The basic motif stretch occupies residues 195-222; it reads RQRRERNNIAVRKSRDKAKRRNQEMQQK. Residues 226–254 are leucine-zipper; it reads LSAENEKLHQRVEQLTRDLAGLRQFFKQL.

The protein belongs to the bZIP family. C/EBP subfamily. In terms of assembly, binds DNA as a homodimer and as a heterodimer. Can form stable heterodimers with CEBPB. Can form stable heterodimers with CEBPA and CEBPE. Directly interacts with SPI1/PU.1; this interaction does not affect DNA-binding properties of each partner. Interacts with PRDM16.

It localises to the nucleus. In terms of biological role, transcription activator that recognizes two different DNA motifs: the CCAAT homology common to many promoters and the enhanced core homology common to many enhancers. Important transcription factor regulating the expression of genes involved in immune and inflammatory responses. Transcriptional activator that enhances IL6 transcription alone and as heterodimer with CEBPB. This Homo sapiens (Human) protein is CCAAT/enhancer-binding protein delta (CEBPD).